The sequence spans 644 residues: ATP-dependent zinc metalloprotease FtsH (644 aa).

Residues 1 to 11 (MNDNKNNTVRN) lie on the Stromal side of the membrane. Residues 12-32 (LLIGIALLSGISLTAKKFDLI) traverse the membrane as a helical segment. At 33-128 (GVQGSESGKN…FDAHPAEQKN (96 aa)) the chain is on the lumenal side. Residues 129–149 (IFVNILSNILLPIIFITGLVY) form a helical membrane-spanning segment. The Stromal segment spans residues 150–644 (LFQNSENFGG…KNIPYVSKFN (495 aa)). 226 to 233 (GPPGTGKT) is a binding site for ATP. His-447 serves as a coordination point for Zn(2+). Glu-448 is a catalytic residue. His-451 and Asp-525 together coordinate Zn(2+).

In the central section; belongs to the AAA ATPase family. This sequence in the C-terminal section; belongs to the peptidase M41 family. Homohexamer. It depends on Zn(2+) as a cofactor.

The protein localises to the plastid. It is found in the chloroplast thylakoid membrane. Its function is as follows. Acts as a processive, ATP-dependent zinc metallopeptidase. This Trieres chinensis (Marine centric diatom) protein is ATP-dependent zinc metalloprotease FtsH.